The chain runs to 431 residues: Protein CLT2, chloroplastic (431 aa).

The N-terminal 79 residues, 1–79 (MDTVLMATTP…PMRRPRFSVG (79 aa)), are a transit peptide targeting the chloroplast. The next 10 membrane-spanning stretches (helical) occupy residues 99–119 (VVIV…LVPM), 122–142 (YPFF…FTIL), 163–183 (FAII…AAAM), 188–208 (VIPI…LLIL), 212–232 (FLLN…VAVS), 244–264 (IGFL…GASI), 284–304 (IFVV…LLLP), 343–363 (ILPL…LHLV), 365–385 (ISSA…AVYI), and 403–423 (FTMG…PTTP).

It belongs to the CRT-like transporter family.

The protein localises to the plastid. It is found in the chloroplast membrane. In terms of biological role, involved in thiol transport from the plastid to the cytosol. Transports probably both glutathione (GSH) and its precursor, gamma-glutamylcysteine (gamma-EC). This Arabidopsis thaliana (Mouse-ear cress) protein is Protein CLT2, chloroplastic.